A 403-amino-acid polypeptide reads, in one-letter code: Nuclear receptor subfamily 2 group F member 5 (403 aa).

The segment at 16–44 (PGSQLQMCSQEPGGTPGTPSGSTPGNDAL) is disordered. Residues 51-126 (NVDCMVCGDK…VGMRREAVQR (76 aa)) constitute a DNA-binding region (nuclear receptor). 2 consecutive NR C4-type zinc fingers follow at residues 54–74 (CMVC…CEGC) and 90–114 (CRGN…LKKC). One can recognise an NR LBD domain in the interval 152–378 (YLSGFISLLL…TLLRDMLLSG (227 aa)).

This sequence belongs to the nuclear hormone receptor family. NR2 subfamily.

The protein localises to the nucleus. Functionally, putative receptor that is required in photoreceptor cells precursors during eye development. The chain is Nuclear receptor subfamily 2 group F member 5 (nr2f5) from Danio rerio (Zebrafish).